The chain runs to 188 residues: Elongation factor P (188 aa).

N6-(3,6-diaminohexanoyl)-5-hydroxylysine is present on Lys-34.

Belongs to the elongation factor P family. In terms of processing, may be beta-lysylated on the epsilon-amino group of Lys-34 by the combined action of EpmA and EpmB, and then hydroxylated on the C5 position of the same residue by EpmC (if this protein is present). Lysylation is critical for the stimulatory effect of EF-P on peptide-bond formation. The lysylation moiety may extend toward the peptidyltransferase center and stabilize the terminal 3-CCA end of the tRNA. Hydroxylation of the C5 position on Lys-34 may allow additional potential stabilizing hydrogen-bond interactions with the P-tRNA.

It is found in the cytoplasm. Its pathway is protein biosynthesis; polypeptide chain elongation. Its function is as follows. Involved in peptide bond synthesis. Alleviates ribosome stalling that occurs when 3 or more consecutive Pro residues or the sequence PPG is present in a protein, possibly by augmenting the peptidyl transferase activity of the ribosome. Modification of Lys-34 is required for alleviation. This chain is Elongation factor P, found in Methylococcus capsulatus (strain ATCC 33009 / NCIMB 11132 / Bath).